A 372-amino-acid polypeptide reads, in one-letter code: NAD(P)H-quinone oxidoreductase subunit 1 (372 aa).

Transmembrane regions (helical) follow at residues 27–47, 97–117, 130–150, 176–196, 204–224, 254–274, 308–328, and 351–371; these read AIWMPLPMFLMIIAATVGVLV, WLFLFGPILVVMPVFVSYLIV, VGIFLWISLSSIAPIGLLMAG, LALSVLAIVMMSNSLSTIDIV, ILGWNIWRQPVGFLIFWIAAL, FALFYVGSYVNLVLSALVFAV, SLGITMTVLKAYFLIFIAILL, and VSLVNLLLTAALKLAFPFAFG.

Belongs to the complex I subunit 1 family. NDH-1 is composed of at least 11 different subunits.

It is found in the cellular thylakoid membrane. The catalysed reaction is a plastoquinone + NADH + (n+1) H(+)(in) = a plastoquinol + NAD(+) + n H(+)(out). It catalyses the reaction a plastoquinone + NADPH + (n+1) H(+)(in) = a plastoquinol + NADP(+) + n H(+)(out). Its function is as follows. NDH-1 shuttles electrons from an unknown electron donor, via FMN and iron-sulfur (Fe-S) centers, to quinones in the respiratory and/or the photosynthetic chain. The immediate electron acceptor for the enzyme in this species is believed to be plastoquinone. Couples the redox reaction to proton translocation, and thus conserves the redox energy in a proton gradient. This is NAD(P)H-quinone oxidoreductase subunit 1 from Microcystis aeruginosa (strain NIES-843 / IAM M-2473).